Consider the following 531-residue polypeptide: MAAVKTLNPKAEVARAQAALAVNISAARGLQDVLRTNLGPKGTMKMLVSGAGDIKLTKDGNVLLHEMQIQHPTASLIAKVATAQDDITGDGTTSNVLIIGELLKQADLYISEGLHPRIITEGFEAAKEKALQFLEEVKVSREMDRETLIDVARTSLRTKVHAELADVLTEAVVDSILAIKKQDEPIDLFMIEIMEMKHKSETDTSLIRGLVLDHGARHPDMKKRVEDAYILTCNVSLEYEKTEVNSGFFYKSAEEREKLVKAERKFIEDRVKKIIELKRKVCGDSDKGFVVINQKGIDPFSLDALSKEGIVALRRAKRRNMERLTLACGGVALNSFDDLSPDCLGHAGLVYEYTLGEEKFTFIEKCNNPRSVTLLIKGPNKHTLTQIKDAVRDGLRAVKNAIDDGCVVPGAGAVEVAMAEALIKHKPSVKGRAQLGVQAFADALLIIPKVLAQNSGFDLQETLVKIQAEHSESGQLVGVDLNTGEPMVAAEVGVWDNYCVKKQLLHSCTVIATNILLVDEIMRAGMSSLKG.

A2 carries the post-translational modification N-acetylalanine. K5 bears the N6-acetyllysine mark. Residue G39 coordinates ADP. Residue G39 participates in ATP binding. D90 contacts Mg(2+). G91, T92, T93, S94, T158, and K159 together coordinate ADP. ATP-binding residues include G91, T92, and T93. Position 199 is an N6-acetyllysine (K199). At S205 the chain carries Phosphoserine. Residue K251 forms a Glycyl lysine isopeptide (Lys-Gly) (interchain with G-Cter in SUMO2) linkage. Residues K287, K365, K377, and K388 each carry the N6-acetyllysine modification. An ADP-binding site is contributed by A411. ATP-binding residues include A411, G412, D496, and K501. ADP is bound at residue D496.

It belongs to the TCP-1 chaperonin family. In terms of assembly, component of the chaperonin-containing T-complex (TRiC), a hexadecamer composed of two identical back-to-back stacked rings enclosing a protein folding chamber. Each ring is made up of eight different subunits: TCP1/CCT1, CCT2, CCT3, CCT4, CCT5, CCT6A/CCT6, CCT7, CCT8. Interacts with PACRG.

Its subcellular location is the cytoplasm. It carries out the reaction ATP + H2O = ADP + phosphate + H(+). Component of the chaperonin-containing T-complex (TRiC), a molecular chaperone complex that assists the folding of actin, tubulin and other proteins upon ATP hydrolysis. The TRiC complex mediates the folding of WRAP53/TCAB1, thereby regulating telomere maintenance. The sequence is that of T-complex protein 1 subunit zeta (CCT6A) from Homo sapiens (Human).